Consider the following 146-residue polypeptide: Snaclec coagulation factor IX/factor X-binding protein subunit B2 (146 aa).

A signal peptide spans 1–23 (MGRLIFVSFGLLVVFLSLSGTAA). Intrachain disulfides connect cysteine 25–cysteine 36, cysteine 53–cysteine 142, and cysteine 119–cysteine 134. Residues 32 to 143 (YEGHCYKPFN…CRMMANFVCE (112 aa)) enclose the C-type lectin domain.

This sequence belongs to the snaclec family. Heterodimer of subunits A and B2; disulfide-linked. Expressed by the venom gland.

The protein localises to the secreted. Functionally, anticoagulant protein which binds to the gamma-carboxyglutamic acid-domain regions of factors IX (F9) and factor X (F10) in the presence of calcium with a 1 to 1 stoichiometry. This is Snaclec coagulation factor IX/factor X-binding protein subunit B2 from Trimeresurus stejnegeri (Chinese green tree viper).